The chain runs to 169 residues: Sec-independent protein translocase protein TatB (169 aa).

A helical membrane pass occupies residues 2 to 22 (SPGIGMPELLVVLVLALVVVG). The disordered stretch occupies residues 106-169 (NQAETDADKA…AKPVDEIKGR (64 aa)).

Belongs to the TatB family. As to quaternary structure, the Tat system comprises two distinct complexes: a TatABC complex, containing multiple copies of TatA, TatB and TatC subunits, and a separate TatA complex, containing only TatA subunits. Substrates initially bind to the TatABC complex, which probably triggers association of the separate TatA complex to form the active translocon.

It is found in the cell inner membrane. Part of the twin-arginine translocation (Tat) system that transports large folded proteins containing a characteristic twin-arginine motif in their signal peptide across membranes. Together with TatC, TatB is part of a receptor directly interacting with Tat signal peptides. TatB may form an oligomeric binding site that transiently accommodates folded Tat precursor proteins before their translocation. The sequence is that of Sec-independent protein translocase protein TatB from Maricaulis maris (strain MCS10) (Caulobacter maris).